We begin with the raw amino-acid sequence, 261 residues long: UPF0328 protein ECU06_0100 (261 aa).

This sequence belongs to the UPF0328 family.

This is UPF0328 protein ECU06_0100 from Encephalitozoon cuniculi (strain GB-M1) (Microsporidian parasite).